The chain runs to 1149 residues: DNA-directed RNA polymerase III subunit RPC2 (1149 aa).

Cysteine 1095, cysteine 1098, cysteine 1107, and cysteine 1110 together coordinate Zn(2+). The C4-type zinc finger occupies 1095–1110 (CDKCGLMGYSGWCTTC).

Belongs to the RNA polymerase beta chain family. As to quaternary structure, component of the RNA polymerase III (Pol III) complex consisting of 17 subunits.

It localises to the nucleus. The enzyme catalyses RNA(n) + a ribonucleoside 5'-triphosphate = RNA(n+1) + diphosphate. In terms of biological role, DNA-dependent RNA polymerase catalyzes the transcription of DNA into RNA using the four ribonucleoside triphosphates as substrates. Second largest core component of RNA polymerase III which synthesizes small RNAs, such as 5S rRNA and tRNAs. Proposed to contribute to the polymerase catalytic activity and forms the polymerase active center together with the largest subunit. Pol III is composed of mobile elements and RPC2 is part of the core element with the central large cleft and probably a clamp element that moves to open and close the cleft. The chain is DNA-directed RNA polymerase III subunit RPC2 (RET1) from Saccharomyces cerevisiae (strain ATCC 204508 / S288c) (Baker's yeast).